Consider the following 486-residue polypeptide: Mogroside I-E synthase (486 aa).

UDP-alpha-D-glucose contacts are provided by Ser302, Cys360, Gln362, Trp380, Asn381, Ser382, Glu385, Asp401, and Gln402.

This sequence belongs to the UDP-glycosyltransferase family. Highly expressed in young fruits 15 days after anthesis (15-DAA).

It carries out the reaction mogrol + UDP-alpha-D-glucose = mogroside IE + UDP + H(+). It catalyses the reaction mogroside I-A1 + UDP-alpha-D-glucose = mogroside IIE + UDP + H(+). The catalysed reaction is mogroside II-A1 + UDP-alpha-D-glucose = mogroside IIIX + UDP + H(+). The enzyme catalyses mogroside II-A + UDP-alpha-D-glucose = mogroside III + UDP + H(+). It participates in secondary metabolite biosynthesis; terpenoid biosynthesis. UDP-glycosyltransferase involved in the biosynthesis of cucurbitacin and mogroside tetracyclic triterpene natural products (e.g. siamenoside I and mogrosides IV, V and VI). Cucurbitacins have cytotoxic properties and exhibit deterrent taste as a defense barrier against herbivores. Mogrosides are nonsugar highly oxygenated compounds used as high-intensity zero-calorie sweeteners; they also possess pharmacological properties such as regulating immunity, lowering blood sugar and lipid levels, protecting the liver, and acting as antioxidants and antitumor agents. Catalyzes the C3 primary glucosylation of mogrol, mogroside I-A1, mogroside II-A1 and mogroside II-A. This Siraitia grosvenorii (Monk's fruit) protein is Mogroside I-E synthase.